Reading from the N-terminus, the 359-residue chain is Nicotinate N-methyltransferase 1 (359 aa).

S-adenosyl-L-methionine is bound at residue aspartate 226.

The protein belongs to the class I-like SAM-binding methyltransferase superfamily. Cation-independent O-methyltransferase family. Highly expressed in anthers, pistils, developing siliques, and developing seeds.

The protein localises to the cytoplasm. The protein resides in the cytosol. It carries out the reaction nicotinate + S-adenosyl-L-methionine = N-methylnicotinate + S-adenosyl-L-homocysteine. Its function is as follows. Involved in nicotinate detoxification in planta. Catalyzes the conversion of nicotinate to N-methylnicotinate, which is a detoxified form of endogenous nicotinate in planta. This chain is Nicotinate N-methyltransferase 1, found in Arabidopsis thaliana (Mouse-ear cress).